Here is a 488-residue protein sequence, read N- to C-terminus: MTFKDLRDFIAQLEQRGALKRIQVPISPVLEMTEVCDRTLRAKGPALLFEKPTGFDMPVLGNLFGTPERVALGMGAEDVGALREIGKLLAQLKEPEPPKGLKDAWAKLPMYRKVLSMAPKVLKDAPCQEVVEEGEDVDLGRLPVQTCWPGDVGPLITWGLTVTRGPNKERQNLGIYRQQVIGRNKVIMRWLSHRGGALDYREWCQKHPGQPYPVAVALGADPATILGAVTPVPDTLSEYAFAGLLRGHRTELVKCRGSDLQVPASAEIVLEGVIHPGEMADEGPYGDHTGYYNEVDRFPVFTVERVTRRQKPIYHSTYTGRPPDEPAILGVALNEVFVPILQKQFPEIVDFYLPPEGCSYRMAVVTMKKQYPGHAKRVMLGVWSFLRQFMYTKFVIVTDDDIDARDWNDVIWAITTRMDPKRDTVMIDNTPIDYLDFASPVSGLGSKMGLDATHKWPGETSREWGRAIVKDEAVTRRIDALWSSLGID.

Asn172 provides a ligand contact to Mn(2+). Prenylated FMN-binding positions include 175–177, 189–191, and 194–195; these read IYR, RWL, and RG. Mn(2+) is bound at residue Glu238. Asp287 acts as the Proton donor in catalysis.

This sequence belongs to the UbiD family. In terms of assembly, homohexamer. Prenylated FMN serves as cofactor. The cofactor is Mn(2+).

Its subcellular location is the cell membrane. The enzyme catalyses a 4-hydroxy-3-(all-trans-polyprenyl)benzoate + H(+) = a 2-(all-trans-polyprenyl)phenol + CO2. Its pathway is cofactor biosynthesis; ubiquinone biosynthesis. Its function is as follows. Catalyzes the decarboxylation of 3-octaprenyl-4-hydroxy benzoate to 2-octaprenylphenol, an intermediate step in ubiquinone biosynthesis. The polypeptide is 3-octaprenyl-4-hydroxybenzoate carboxy-lyase (Pseudomonas aeruginosa (strain LESB58)).